The sequence spans 146 residues: General odorant-binding protein 19a (146 aa).

Residues 1-22 (MKFHLLLVCVAISLGPIPQSEA) form the signal peptide. Cystine bridges form between cysteine 40–cysteine 72, cysteine 68–cysteine 126, and cysteine 113–cysteine 135.

This sequence belongs to the PBP/GOBP family. Expressed in adult olfactory system. Expressed exclusively in a subset of chemosensory sensilla on the third antennal segment.

Its subcellular location is the secreted. Its function is as follows. Present in the aqueous fluid surrounding olfactory sensory dendrites and are thought to aid in the capture and transport of hydrophobic odorants into and through this fluid. This chain is General odorant-binding protein 19a (Obp19a), found in Drosophila melanogaster (Fruit fly).